Consider the following 464-residue polypeptide: Argininosuccinate lyase (464 aa).

This sequence belongs to the lyase 1 family. Argininosuccinate lyase subfamily.

The protein localises to the cytoplasm. It carries out the reaction 2-(N(omega)-L-arginino)succinate = fumarate + L-arginine. It participates in amino-acid biosynthesis; L-arginine biosynthesis; L-arginine from L-ornithine and carbamoyl phosphate: step 3/3. The sequence is that of Argininosuccinate lyase from Sulfurovum sp. (strain NBC37-1).